The primary structure comprises 301 residues: Acetylglutamate kinase (301 aa).

Residues G71–G72, R93, and N198 each bind substrate.

This sequence belongs to the acetylglutamate kinase family. ArgB subfamily.

Its subcellular location is the cytoplasm. It catalyses the reaction N-acetyl-L-glutamate + ATP = N-acetyl-L-glutamyl 5-phosphate + ADP. Its pathway is amino-acid biosynthesis; L-arginine biosynthesis; N(2)-acetyl-L-ornithine from L-glutamate: step 2/4. Functionally, catalyzes the ATP-dependent phosphorylation of N-acetyl-L-glutamate. The polypeptide is Acetylglutamate kinase (Rhizorhabdus wittichii (strain DSM 6014 / CCUG 31198 / JCM 15750 / NBRC 105917 / EY 4224 / RW1) (Sphingomonas wittichii)).